The primary structure comprises 264 residues: Undecaprenyl-diphosphatase (264 aa).

Helical transmembrane passes span 1–21 (MEISHVIVLALVQGISEFLPI), 39–59 (QGLAFDVAVHVGTLSAILFYF), 83–103 (SLLVWCVGFATIPVGIFGLLF), 113–133 (SGVVIAVTTIIFGIALYFADL), 143–163 (MTIKFALIIGLAQAVALIPGV), 184–204 (ANFSFLLSIPVIILAGGLESI), 220–240 (LGVIISAVSAYICVKLFMGII), and 243–263 (IRMLPFVIYRLILGAFLLYLF).

Belongs to the UppP family.

It localises to the cell inner membrane. It carries out the reaction di-trans,octa-cis-undecaprenyl diphosphate + H2O = di-trans,octa-cis-undecaprenyl phosphate + phosphate + H(+). Its function is as follows. Catalyzes the dephosphorylation of undecaprenyl diphosphate (UPP). Confers resistance to bacitracin. The sequence is that of Undecaprenyl-diphosphatase from Campylobacter concisus (strain 13826).